The sequence spans 143 residues: Ribosome-binding factor A (143 aa).

Residues 123–143 (VRAQAAQAKPAGEANPYKERN) form a disordered region. The segment covering 124 to 136 (RAQAAQAKPAGEA) has biased composition (low complexity).

Belongs to the RbfA family. In terms of assembly, monomer. Binds 30S ribosomal subunits, but not 50S ribosomal subunits or 70S ribosomes.

The protein resides in the cytoplasm. Its function is as follows. One of several proteins that assist in the late maturation steps of the functional core of the 30S ribosomal subunit. Associates with free 30S ribosomal subunits (but not with 30S subunits that are part of 70S ribosomes or polysomes). Required for efficient processing of 16S rRNA. May interact with the 5'-terminal helix region of 16S rRNA. The protein is Ribosome-binding factor A of Corynebacterium urealyticum (strain ATCC 43042 / DSM 7109).